Reading from the N-terminus, the 333-residue chain is Salivary glue protein Sgs-3 (333 aa).

The N-terminal stretch at 1-23 (MKLTIATALVGILLIACAHVANG) is a signal peptide. The disordered stretch occupies residues 51 to 285 (TCRPPTTTRC…ATARPTSKPC (235 aa)). The span at 60 to 73 (CPPPTTTRCPPPTR) shows a compositional bias: pro residues. Residues 74–88 (PAECTATTKRPTARP) are compositionally biased toward low complexity. Over residues 89–277 (TTKRATTRRT…TKRATTKRAT (189 aa)) the composition is skewed to basic residues.

The chain is Salivary glue protein Sgs-3 (Sgs3) from Drosophila erecta (Fruit fly).